We begin with the raw amino-acid sequence, 418 residues long: MDKIVIRGGKKLKGEIVVSGSKNSALPILFATLLTDDPVMITNVPSLTDIDTAIAFLNFIGKKTVKEGNTVKAYSSYKYKHIAPYDLVRKMRASILIMGPLLVRLKRIEVSLPGGCAIGARPVDIHLAAFKKLGAKISVKGGYVKTSAKNGLKGATISFRVPSVGATENILLTAVLAKGKTIIKNAAREPEIEDLANVLTKMGAKVMGAGTKNIEIEGVDKLHGFMHEVIPDRIEAATYLIAAAITKGGVILKKVIPQHLKSVNDKLKKCGLCIKETKNTISAEWVKNLKPQNVKTEAYPGFPTDVQAQWMSLMCLLNGESCIEENVFENRFLHVSELQRFGADITVNGKTVNIKGVKEFSGAPVMVSDLRAGAALVLAGLAAKGKTVVSRIYHLNRGYDMLEKKLKKLGADIRIIHN.

22-23 serves as a coordination point for phosphoenolpyruvate; the sequence is KN. Arg92 is a UDP-N-acetyl-alpha-D-glucosamine binding site. Cys116 (proton donor) is an active-site residue. Cys116 bears the 2-(S-cysteinyl)pyruvic acid O-phosphothioketal mark. Positions 305 and 327 each coordinate UDP-N-acetyl-alpha-D-glucosamine.

The protein belongs to the EPSP synthase family. MurA subfamily.

The protein localises to the cytoplasm. It catalyses the reaction phosphoenolpyruvate + UDP-N-acetyl-alpha-D-glucosamine = UDP-N-acetyl-3-O-(1-carboxyvinyl)-alpha-D-glucosamine + phosphate. It functions in the pathway cell wall biogenesis; peptidoglycan biosynthesis. Cell wall formation. Adds enolpyruvyl to UDP-N-acetylglucosamine. The chain is UDP-N-acetylglucosamine 1-carboxyvinyltransferase from Endomicrobium trichonymphae.